We begin with the raw amino-acid sequence, 197 residues long: MKKRRSKKERQELLQQTIETNPFITDEDLAEKFQVSIQTVRLDRMELSIPELRERIKHVATKQHEEDVKSLPLEEVVGEIIDIELDRHAISIFEVKVEHVFKRNQIARGHHLFAQANSLAVAVIDEELALTAKSTIRYIRPVKLGERVVAKARVEDVENGKGRTVVKVRSFVGEELVFTGTFEMYRSSNYSEEGNNL.

The protein belongs to the FapR family.

Its function is as follows. Transcriptional factor involved in regulation of membrane lipid biosynthesis by repressing genes involved in fatty acid and phospholipid metabolism. The chain is Transcription factor FapR from Bacillus cereus (strain 03BB102).